Here is a 138-residue protein sequence, read N- to C-terminus: Putative nickel-responsive regulator (138 aa).

4 residues coordinate Ni(2+): H76, H87, H89, and C95.

Belongs to the transcriptional regulatory CopG/NikR family. Ni(2+) is required as a cofactor.

Transcriptional regulator. The chain is Putative nickel-responsive regulator from Pseudomonas putida (strain W619).